The primary structure comprises 122 residues: MSLTNEQIIEAIASKTVTEIVELISAMEEKFGVSAAAAAVAVAAGPAEVAEEKTEFDVVLAEAGANKVAVIKAVRGATGLGLKEAKDLVESAPANLKEGISKAEAEALKKELEEAGAKVEIK.

The protein belongs to the bacterial ribosomal protein bL12 family. As to quaternary structure, homodimer. Part of the ribosomal stalk of the 50S ribosomal subunit. Forms a multimeric L10(L12)X complex, where L10 forms an elongated spine to which 2 to 4 L12 dimers bind in a sequential fashion. Binds GTP-bound translation factors.

Functionally, forms part of the ribosomal stalk which helps the ribosome interact with GTP-bound translation factors. Is thus essential for accurate translation. In Histophilus somni (strain 129Pt) (Haemophilus somnus), this protein is Large ribosomal subunit protein bL12.